Here is a 94-residue protein sequence, read N- to C-terminus: DNA-binding protein HU (94 aa).

The protein belongs to the bacterial histone-like protein family.

Histone-like DNA-binding protein which is capable of wrapping DNA to stabilize it, and thus to prevent its denaturation under extreme environmental conditions. In Xylella fastidiosa (strain 9a5c), this protein is DNA-binding protein HU (hup).